The following is a 209-amino-acid chain: Redox-sensing transcriptional repressor Rex (209 aa).

The H-T-H motif DNA-binding region spans 16-55 (LYYRFIQNLSLSGKQRVSSAELSEAVKVDSATIRRDFSYF). An NAD(+)-binding site is contributed by 90–95 (GVGNLG).

Belongs to the transcriptional regulatory Rex family. Homodimer.

The protein localises to the cytoplasm. Its function is as follows. Modulates transcription in response to changes in cellular NADH/NAD(+) redox state. The chain is Redox-sensing transcriptional repressor Rex from Bacillus cereus (strain ATCC 10987 / NRS 248).